Reading from the N-terminus, the 389-residue chain is Phospho-N-acetylmuramoyl-pentapeptide-transferase (389 aa).

Helical transmembrane passes span 25-45, 73-93, 97-117, 135-155, 189-209, 222-242, 259-279, 286-306, 311-331, and 366-386; these read RAVA…PWVI, TMGG…WADL, FIWI…VDDY, FWQS…VSEA, SMTY…VIVG, GLVI…AYVM, AGEM…FLWF, VFMG…IAVI, IVLF…MLQV, and QVVV…LSTL.

The protein belongs to the glycosyltransferase 4 family. MraY subfamily. Mg(2+) is required as a cofactor.

It is found in the cell inner membrane. It catalyses the reaction UDP-N-acetyl-alpha-D-muramoyl-L-alanyl-gamma-D-glutamyl-meso-2,6-diaminopimeloyl-D-alanyl-D-alanine + di-trans,octa-cis-undecaprenyl phosphate = di-trans,octa-cis-undecaprenyl diphospho-N-acetyl-alpha-D-muramoyl-L-alanyl-D-glutamyl-meso-2,6-diaminopimeloyl-D-alanyl-D-alanine + UMP. It participates in cell wall biogenesis; peptidoglycan biosynthesis. Catalyzes the initial step of the lipid cycle reactions in the biosynthesis of the cell wall peptidoglycan: transfers peptidoglycan precursor phospho-MurNAc-pentapeptide from UDP-MurNAc-pentapeptide onto the lipid carrier undecaprenyl phosphate, yielding undecaprenyl-pyrophosphoryl-MurNAc-pentapeptide, known as lipid I. The sequence is that of Phospho-N-acetylmuramoyl-pentapeptide-transferase from Paraburkholderia phymatum (strain DSM 17167 / CIP 108236 / LMG 21445 / STM815) (Burkholderia phymatum).